A 483-amino-acid chain; its full sequence is Aspartyl/glutamyl-tRNA(Asn/Gln) amidotransferase subunit B (483 aa).

Belongs to the GatB/GatE family. GatB subfamily. In terms of assembly, heterotrimer of A, B and C subunits.

It carries out the reaction L-glutamyl-tRNA(Gln) + L-glutamine + ATP + H2O = L-glutaminyl-tRNA(Gln) + L-glutamate + ADP + phosphate + H(+). The catalysed reaction is L-aspartyl-tRNA(Asn) + L-glutamine + ATP + H2O = L-asparaginyl-tRNA(Asn) + L-glutamate + ADP + phosphate + 2 H(+). In terms of biological role, allows the formation of correctly charged Asn-tRNA(Asn) or Gln-tRNA(Gln) through the transamidation of misacylated Asp-tRNA(Asn) or Glu-tRNA(Gln) in organisms which lack either or both of asparaginyl-tRNA or glutaminyl-tRNA synthetases. The reaction takes place in the presence of glutamine and ATP through an activated phospho-Asp-tRNA(Asn) or phospho-Glu-tRNA(Gln). In Rickettsia typhi (strain ATCC VR-144 / Wilmington), this protein is Aspartyl/glutamyl-tRNA(Asn/Gln) amidotransferase subunit B.